The chain runs to 734 residues: Photosystem I P700 chlorophyll a apoprotein A2 (734 aa).

8 helical membrane passes run 46–69, 135–158, 175–199, 273–291, 330–353, 369–395, 417–439, and 517–535; these read IFASHFGQLAIIFLWTSGNLFHVA, LYTGALFLLVGAAILLFAGWLHLQ, LNHHLAGLFGVSSLAWTGHLVHVAI, MAHHHLAIAVVFILAGHMY, LHFQLGLALASLGVITSLVAQHMY, SALYTHHQYIAGFIMTGAFAHGAIFFI, ALISHLSWVTLFLGFHTLGLYVH, and FLVHHAIALGLHTTTLILV. Residues cysteine 559 and cysteine 568 each coordinate [4Fe-4S] cluster. Transmembrane regions (helical) follow at residues 575 to 596 and 643 to 665; these read AFYLAVFWMLNTIGWTTFYWHW and LSVWAWMFLFGHLVWATGFMFLI. Positions 654, 662, and 670 each coordinate chlorophyll a. Residue tryptophan 671 coordinates phylloquinone. Residues 707-727 form a helical membrane-spanning segment; that stretch reads LVGLAHFSVGYVFTYAAFVIA.

Belongs to the PsaA/PsaB family. As to quaternary structure, the PsaA/B heterodimer binds the P700 chlorophyll special pair and subsequent electron acceptors. PSI consists of a core antenna complex that captures photons, and an electron transfer chain that converts photonic excitation into a charge separation. The eukaryotic PSI reaction center is composed of at least 11 subunits. Requires P700 is a chlorophyll a/chlorophyll a' dimer, A0 is one or more chlorophyll a, A1 is one or both phylloquinones and FX is a shared 4Fe-4S iron-sulfur center. as cofactor.

The protein resides in the plastid. It is found in the chloroplast thylakoid membrane. The catalysed reaction is reduced [plastocyanin] + hnu + oxidized [2Fe-2S]-[ferredoxin] = oxidized [plastocyanin] + reduced [2Fe-2S]-[ferredoxin]. PsaA and PsaB bind P700, the primary electron donor of photosystem I (PSI), as well as the electron acceptors A0, A1 and FX. PSI is a plastocyanin/cytochrome c6-ferredoxin oxidoreductase, converting photonic excitation into a charge separation, which transfers an electron from the donor P700 chlorophyll pair to the spectroscopically characterized acceptors A0, A1, FX, FA and FB in turn. Oxidized P700 is reduced on the lumenal side of the thylakoid membrane by plastocyanin or cytochrome c6. This chain is Photosystem I P700 chlorophyll a apoprotein A2, found in Nephroselmis olivacea (Green alga).